Consider the following 443-residue polypeptide: uncharacterized protein (443 aa).

Residues H164 and D386 each act as proton acceptor in the active site.

The protein belongs to the plant acyltransferase family.

This is an uncharacterized protein from Arabidopsis thaliana (Mouse-ear cress).